Consider the following 91-residue polypeptide: Small ribosomal subunit protein uS17 (91 aa).

This sequence belongs to the universal ribosomal protein uS17 family. Part of the 30S ribosomal subunit.

Its function is as follows. One of the primary rRNA binding proteins, it binds specifically to the 5'-end of 16S ribosomal RNA. The protein is Small ribosomal subunit protein uS17 of Malacoplasma penetrans (strain HF-2) (Mycoplasma penetrans).